The primary structure comprises 160 residues: Phosphopantetheine adenylyltransferase (160 aa).

Thr11 is a substrate binding site. Residues 11–12 (TF) and His19 each bind ATP. Lys43, Leu75, and Arg89 together coordinate substrate. Residues 90–92 (GLR), Glu100, and 125–131 (HMFVSAS) contribute to the ATP site.

It belongs to the bacterial CoaD family. As to quaternary structure, homohexamer. Requires Mg(2+) as cofactor.

The protein resides in the cytoplasm. The catalysed reaction is (R)-4'-phosphopantetheine + ATP + H(+) = 3'-dephospho-CoA + diphosphate. Its pathway is cofactor biosynthesis; coenzyme A biosynthesis; CoA from (R)-pantothenate: step 4/5. Functionally, reversibly transfers an adenylyl group from ATP to 4'-phosphopantetheine, yielding dephospho-CoA (dPCoA) and pyrophosphate. This chain is Phosphopantetheine adenylyltransferase, found in Methylobacillus flagellatus (strain ATCC 51484 / DSM 6875 / VKM B-1610 / KT).